Consider the following 114-residue polypeptide: Large ribosomal subunit protein uL22 (114 aa).

Belongs to the universal ribosomal protein uL22 family. In terms of assembly, part of the 50S ribosomal subunit.

In terms of biological role, this protein binds specifically to 23S rRNA; its binding is stimulated by other ribosomal proteins, e.g. L4, L17, and L20. It is important during the early stages of 50S assembly. It makes multiple contacts with different domains of the 23S rRNA in the assembled 50S subunit and ribosome. Its function is as follows. The globular domain of the protein is located near the polypeptide exit tunnel on the outside of the subunit, while an extended beta-hairpin is found that lines the wall of the exit tunnel in the center of the 70S ribosome. The chain is Large ribosomal subunit protein uL22 from Streptococcus suis (strain 98HAH33).